Here is a 175-residue protein sequence, read N- to C-terminus: Coagulogen (175 aa).

Intrachain disulfides connect Cys-8–Cys-167, Cys-10–Cys-95, Cys-60–Cys-161, Cys-65–Cys-121, Cys-75–Cys-168, Cys-88–Cys-140, Cys-127–Cys-170, and Cys-134–Cys-172.

This sequence belongs to the coagulin family. In terms of assembly, coagulogen is cleaved after Arg-18 and Arg-46 by a clotting enzyme contained in the hemocyte and activated by a bacterial endotoxin (lipopolysaccharide). This cleavage releases the peptide C and leaves 2 chains of coagulin, A and B, linked by two disulfide bonds. Coagulin molecules interlink to form a gel. In terms of tissue distribution, hemolymph.

Its subcellular location is the secreted. Its function is as follows. Coagulogen is a gel-forming protein of hemolymph; it hinders the spread of invaders by immobilizing them. In Tachypleus gigas (Southeast Asian horseshoe crab), this protein is Coagulogen.